The following is a 476-amino-acid chain: MKIMFVAAEGAPFAKTGGLGDVIGALPKSLVKNGHEVSVILPYYDVVDQAFGQQVEDVLYFYTQVGWRRQYVGIKKLVKDKVTFYFIDNQGYFFRGRIYGDWDDGERFAYFQLAAIEAMEKIGVIPDILHVHDYHTAMIPFLLKEKYHWIQAYQAIRTVFTIHNIAFQGQFDPGMLGDLFDVGIERYEDGTLRWHDCLNWMKAAVLYADRVTTVSPSYAHEIQTPAFGQGLDQVMRMEAGKLSGIVNGIDTDLFNPARDPHLPASFSAEDLSGKAATKQALQERLGLPVRADVPLIGMVSRLTDQKGFQLVLEELPHILQQDVQLVLLGTGDPDYEAAFSWFAKAYPEKLSANITFDLPLAQQIYGACDLFLMPSAFEPCGLSQMMAMRYGAIPIVHEIGGLKDTVASYNAYEKTGTGFGFDQFSGFWLTQTLLFALDIYHNHKEDWQTIQQHAMTKDFSWDTASLAYLDLYKSLL.

K15 contacts ADP-alpha-D-glucose.

This sequence belongs to the glycosyltransferase 1 family. Bacterial/plant glycogen synthase subfamily.

It catalyses the reaction [(1-&gt;4)-alpha-D-glucosyl](n) + ADP-alpha-D-glucose = [(1-&gt;4)-alpha-D-glucosyl](n+1) + ADP + H(+). It participates in glycan biosynthesis; glycogen biosynthesis. Synthesizes alpha-1,4-glucan chains using ADP-glucose. The chain is Glycogen synthase from Streptococcus equi subsp. equi (strain 4047).